The primary structure comprises 634 residues: DNA-directed RNA polymerase subunit gamma (634 aa).

4 residues coordinate Zn(2+): Cys-74, Cys-76, Cys-89, and Cys-92. Mg(2+) is bound by residues Asp-471, Asp-473, and Asp-475.

The protein belongs to the RNA polymerase beta' chain family. RpoC1 subfamily. In terms of assembly, in cyanobacteria the RNAP catalytic core is composed of 2 alpha, 1 beta, 1 beta', 1 gamma and 1 omega subunit. When a sigma factor is associated with the core the holoenzyme is formed, which can initiate transcription. It depends on Mg(2+) as a cofactor. Requires Zn(2+) as cofactor.

The enzyme catalyses RNA(n) + a ribonucleoside 5'-triphosphate = RNA(n+1) + diphosphate. Its function is as follows. DNA-dependent RNA polymerase catalyzes the transcription of DNA into RNA using the four ribonucleoside triphosphates as substrates. The sequence is that of DNA-directed RNA polymerase subunit gamma from Prochlorococcus marinus (strain MIT 9303).